Consider the following 464-residue polypeptide: NADH-ubiquinone oxidoreductase chain 4 (464 aa).

The next 13 membrane-spanning stretches (helical) occupy residues Met-1–Gln-21, Ser-63–Ser-83, Phe-98–Leu-118, Leu-119–Trp-139, Phe-152–Ile-172, Ile-197–Leu-217, Pro-227–Ile-247, Leu-261–Val-281, Ala-288–Ser-308, Asn-314–Ala-334, Ile-355–Pro-375, Leu-389–Ile-409, and Leu-443–Leu-463.

Belongs to the complex I subunit 4 family.

The protein localises to the mitochondrion membrane. The enzyme catalyses a ubiquinone + NADH + 5 H(+)(in) = a ubiquinol + NAD(+) + 4 H(+)(out). In terms of biological role, core subunit of the mitochondrial membrane respiratory chain NADH dehydrogenase (Complex I) that is believed to belong to the minimal assembly required for catalysis. Complex I functions in the transfer of electrons from NADH to the respiratory chain. The immediate electron acceptor for the enzyme is believed to be ubiquinone. In Paracentrotus lividus (Common sea urchin), this protein is NADH-ubiquinone oxidoreductase chain 4 (ND4).